Here is a 368-residue protein sequence, read N- to C-terminus: BTB/POZ and TAZ domain-containing protein 5 (368 aa).

Residues 1–25 (MENMDDFSPENVLAPPPPPPPMKKS) form a disordered region. One can recognise a BTB domain in the interval 55-123 (ADVLIHTDDN…LYSSCYEKQD (69 aa)). Residues 233–324 (QTYTQLYEAM…SEQCKVPLCS (92 aa)) form a TAZ-type zinc finger. Positions 335–358 (RKDEKRWKLLVRNVLSTKRIGGSP) are caM-binding.

As to quaternary structure, interacts with CUL3A. In terms of tissue distribution, preferentially expressed in young leaves, roots and stems.

The protein localises to the cytoplasm. It participates in protein modification; protein ubiquitination. Its function is as follows. May act as a substrate-specific adapter of an E3 ubiquitin-protein ligase complex (CUL3-RBX1-BTB) which mediates the ubiquitination and subsequent proteasomal degradation of target proteins. The polypeptide is BTB/POZ and TAZ domain-containing protein 5 (BT5) (Arabidopsis thaliana (Mouse-ear cress)).